We begin with the raw amino-acid sequence, 734 residues long: Photosystem I P700 chlorophyll a apoprotein A2 (734 aa).

8 consecutive transmembrane segments (helical) span residues Ile46–Ala69, Leu135–Gln158, Leu175–Ile199, Ile273–Tyr291, Ile330–Tyr353, Ala369–Ile395, Ala417–His439, and Phe517–Val535. 2 residues coordinate [4Fe-4S] cluster: Cys559 and Cys568. 2 consecutive transmembrane segments (helical) span residues Ala575 to Trp596 and Leu643 to Ile665. Chlorophyll a is bound by residues His654, Met662, and Tyr670. Trp671 provides a ligand contact to phylloquinone. The helical transmembrane segment at Leu707–Ala727 threads the bilayer.

Belongs to the PsaA/PsaB family. In terms of assembly, the PsaA/B heterodimer binds the P700 chlorophyll special pair and subsequent electron acceptors. PSI consists of a core antenna complex that captures photons, and an electron transfer chain that converts photonic excitation into a charge separation. The eukaryotic PSI reaction center is composed of at least 11 subunits. P700 is a chlorophyll a/chlorophyll a' dimer, A0 is one or more chlorophyll a, A1 is one or both phylloquinones and FX is a shared 4Fe-4S iron-sulfur center. serves as cofactor.

It localises to the plastid. It is found in the chloroplast thylakoid membrane. The catalysed reaction is reduced [plastocyanin] + hnu + oxidized [2Fe-2S]-[ferredoxin] = oxidized [plastocyanin] + reduced [2Fe-2S]-[ferredoxin]. Its function is as follows. PsaA and PsaB bind P700, the primary electron donor of photosystem I (PSI), as well as the electron acceptors A0, A1 and FX. PSI is a plastocyanin-ferredoxin oxidoreductase, converting photonic excitation into a charge separation, which transfers an electron from the donor P700 chlorophyll pair to the spectroscopically characterized acceptors A0, A1, FX, FA and FB in turn. Oxidized P700 is reduced on the lumenal side of the thylakoid membrane by plastocyanin. This Calycanthus floridus var. glaucus (Eastern sweetshrub) protein is Photosystem I P700 chlorophyll a apoprotein A2.